The chain runs to 261 residues: ClpXP adapter protein SpxH (261 aa).

The protein belongs to the SpxH family. As to quaternary structure, interacts with Spx.

It localises to the cytoplasm. Its function is as follows. Adapter protein required for efficient degradation of Spx by ClpXP under non-stress conditions. Interaction with Spx stabilizes Spx and exposes the C-terminus of Spx for recognition and proteolysis by ClpXP. The protein is ClpXP adapter protein SpxH of Staphylococcus aureus.